We begin with the raw amino-acid sequence, 922 residues long: MASNFLTKLFGSRNDRLLKQYRKTVARINAMEPEYEKLSDDALRAKTVEFQGRVARGESLDDLLPEAFAVGREASKRVMKMRHFDVQLLGGMALHHGKISEMRTGEGKTLTATLPVYLNALGGKGVHVVTVNDYLANRDARWMGRLYNFLGLTVGINLPQMPREEKQAAYAADITYGTNNEYGFDYLRDNMVYEARDRVQRALNFAIVDEVDSILIDEARTPLIISGQAEDHTAMYIAMNKVVPLLVRQEGEADPRTGEGVTKPGDFTIDEKSHQVFLTEQGHETAERVLAAQGLIPEGASLYDPSHITLMHHLYAALRANHLYHRDQHYVVQNGEIVIVDEFTGRLMSGRRWSEGLHQAVEAKEGVEIQAENQTLASITFQNYFRLYSKLSGMTGTADTEAYEFQEIYGLETVVIPPNRPSKRDDQLDRVYKTTREKYEAAIQDIRECHERGQPVLVGTTSIENSEIIDDLLNKAGLPHQVLNAKQHAREADIVAQAGRAGMITIATNMAGRGTDIVLGGNIEKEVAAIEDDESLDEATKQARIAALREQWAADNEKVKALGGLRIIATERHESRRIDNQLRGRSGRQGDPGSSRFYLSLDDSLMRIFAGERVRAIMERLKMPDGEAIEAGIVTRSIESAQRKVEARNFDIRKQLLEYDDVANDQRKVIYQQRNEILDAADLSGVIAGMRESCLTDIVRQYVPEESVEEQWDLAGLEKALADEWQIRLPLQQEVESAQAITDGEILEKVVAAGNAAFQAKVDMVGPENFHQFQRAVLLQSFDSNWRDHLSALDYLRQGIHLRGYAQKQPKQEYKREAFELFRQLIDQVKNEVTRILLTVQVQSPSELDQAAEALESRAEQIANVTYTAPTETGEPETLPDPRTAGAGGDGLNLPEGVRIGRNDPCPCGSGKKYKQCHGKLA.

ATP is bound by residues Gln-87, 105 to 109, and Asp-516; that span reads GEGKT. The disordered stretch occupies residues 867-912; sequence YTAPTETGEPETLPDPRTAGAGGDGLNLPEGVRIGRNDPCPCGSGK. Residues Cys-906, Cys-908, Cys-917, and His-918 each coordinate Zn(2+).

Belongs to the SecA family. In terms of assembly, monomer and homodimer. Part of the essential Sec protein translocation apparatus which comprises SecA, SecYEG and auxiliary proteins SecDF-YajC and YidC. Zn(2+) is required as a cofactor.

It localises to the cell inner membrane. Its subcellular location is the cytoplasm. The catalysed reaction is ATP + H2O + cellular proteinSide 1 = ADP + phosphate + cellular proteinSide 2.. In terms of biological role, part of the Sec protein translocase complex. Interacts with the SecYEG preprotein conducting channel. Has a central role in coupling the hydrolysis of ATP to the transfer of proteins into and across the cell membrane, serving both as a receptor for the preprotein-SecB complex and as an ATP-driven molecular motor driving the stepwise translocation of polypeptide chains across the membrane. This is Protein translocase subunit SecA from Paracidovorax citrulli (strain AAC00-1) (Acidovorax citrulli).